A 1207-amino-acid chain; its full sequence is DNA-directed RNA polymerase subunit beta' (1207 aa).

Zn(2+) contacts are provided by Cys-60, Cys-62, Cys-75, and Cys-78. Mg(2+) is bound by residues Asp-450, Asp-452, and Asp-454. Residues Cys-819, Cys-893, Cys-900, and Cys-903 each coordinate Zn(2+).

Belongs to the RNA polymerase beta' chain family. In terms of assembly, the RNAP catalytic core consists of 2 alpha, 1 beta, 1 beta' and 1 omega subunit. When a sigma factor is associated with the core the holoenzyme is formed, which can initiate transcription. Mg(2+) is required as a cofactor. Requires Zn(2+) as cofactor.

It carries out the reaction RNA(n) + a ribonucleoside 5'-triphosphate = RNA(n+1) + diphosphate. Functionally, DNA-dependent RNA polymerase catalyzes the transcription of DNA into RNA using the four ribonucleoside triphosphates as substrates. The sequence is that of DNA-directed RNA polymerase subunit beta' from Streptococcus pyogenes serotype M12 (strain MGAS2096).